The primary structure comprises 280 residues: Large ribosomal subunit protein uL2 (280 aa).

Residues 213–280 (RWKGKRPSVR…RRRTGKKHAR (68 aa)) are disordered. The segment covering 268-280 (IVRRRRTGKKHAR) has biased composition (basic residues).

Belongs to the universal ribosomal protein uL2 family. In terms of assembly, part of the 50S ribosomal subunit. Forms a bridge to the 30S subunit in the 70S ribosome.

Functionally, one of the primary rRNA binding proteins. Required for association of the 30S and 50S subunits to form the 70S ribosome, for tRNA binding and peptide bond formation. It has been suggested to have peptidyltransferase activity; this is somewhat controversial. Makes several contacts with the 16S rRNA in the 70S ribosome. This Mycobacterium leprae (strain Br4923) protein is Large ribosomal subunit protein uL2.